Consider the following 87-residue polypeptide: Putative membrane protein insertion efficiency factor (87 aa).

The protein belongs to the UPF0161 family.

Its subcellular location is the cell membrane. Functionally, could be involved in insertion of integral membrane proteins into the membrane. The protein is Putative membrane protein insertion efficiency factor of Ligilactobacillus salivarius (strain UCC118) (Lactobacillus salivarius).